A 434-amino-acid chain; its full sequence is MDMNELARRVKEASIVLASAGTELKNRALAQIARSLQDGREEIIRANREDLLRSEKENLPGPLLKRLKFDEAKIQEVIEGIHSLIELEDPVGRTLLSTELDDGLELYKVTCPIGVIGVIFESRPDALVQISTLCLKSGNGVLLKGGSEARETNRVLAAIIAGATHKAGLPPDWIALLETRSDVGEMLKMDKYIDLIIPRGSNEFVRYIMDNSRIPVLGHADGICHLYVDEDADIQMAVKIAVDAKTQYVAVCNAVETLLVHEKIAPAFLPELKKAMDARQVELIGCPRTRAVIPAAPATEEDWRTEYLDLKLSVKVVAGLDEAIGHINTYGSGHTDGIITRSGEKAARFMDYVDSGNVFWNCSTRFSDGFRYGFGAEVGISTSKVHARGPVGLDGLVIYKYRLIGNGHIVGDYAGRLKTFKHRKMNKDYGIVTK.

Belongs to the gamma-glutamyl phosphate reductase family.

Its subcellular location is the cytoplasm. The catalysed reaction is L-glutamate 5-semialdehyde + phosphate + NADP(+) = L-glutamyl 5-phosphate + NADPH + H(+). The protein operates within amino-acid biosynthesis; L-proline biosynthesis; L-glutamate 5-semialdehyde from L-glutamate: step 2/2. In terms of biological role, catalyzes the NADPH-dependent reduction of L-glutamate 5-phosphate into L-glutamate 5-semialdehyde and phosphate. The product spontaneously undergoes cyclization to form 1-pyrroline-5-carboxylate. In Pelotomaculum thermopropionicum (strain DSM 13744 / JCM 10971 / SI), this protein is Gamma-glutamyl phosphate reductase.